We begin with the raw amino-acid sequence, 182 residues long: MSLQTLQTELKAKLRQYQDFPSKGIVFEDILPIFQDPKSFQQLIDAFKLHIKDTFGDKKIDVIVGLDARGFLFGPTLALAIGAAFVPVRKQGKLPGKTVHAEFQKEYGKDVFEIQEDAIKPGQTVIVVDDIIATGGSAACAGDLVTKLKGEVLEFIFILELLFLKGRDKLCAPAYTLLSGQE.

Residue 133–137 (ATGGS) participates in AMP binding.

It belongs to the purine/pyrimidine phosphoribosyltransferase family. Homodimer. Requires Mg(2+) as cofactor.

It localises to the cytoplasm. It is found in the nucleus. The enzyme catalyses AMP + diphosphate = 5-phospho-alpha-D-ribose 1-diphosphate + adenine. Its pathway is purine metabolism; AMP biosynthesis via salvage pathway; AMP from adenine: step 1/1. Its function is as follows. Catalyzes a salvage reaction resulting in the formation of AMP, that is energically less costly than de novo synthesis. The protein is Adenine phosphoribosyltransferase (APT1) of Yarrowia lipolytica (strain CLIB 122 / E 150) (Yeast).